The primary structure comprises 1390 residues: DNA-directed RNA polymerase subunit beta'' (1390 aa).

4 residues coordinate Zn(2+): Cys-224, Cys-295, Cys-302, and Cys-305.

This sequence belongs to the RNA polymerase beta' chain family. RpoC2 subfamily. In plastids the minimal PEP RNA polymerase catalytic core is composed of four subunits: alpha, beta, beta', and beta''. When a (nuclear-encoded) sigma factor is associated with the core the holoenzyme is formed, which can initiate transcription. It depends on Zn(2+) as a cofactor.

The protein localises to the plastid. It is found in the chloroplast. The catalysed reaction is RNA(n) + a ribonucleoside 5'-triphosphate = RNA(n+1) + diphosphate. Functionally, DNA-dependent RNA polymerase catalyzes the transcription of DNA into RNA using the four ribonucleoside triphosphates as substrates. This chain is DNA-directed RNA polymerase subunit beta'', found in Daucus carota (Wild carrot).